The chain runs to 393 residues: MNVPARIKDLMIVNMGPQHPSMHGVLRLIVTLDGEDVVDCEPILGYLHRGMEKIAENRTIIQYLPYVTRWDYLATMFTEAITVNGPEQLGNIQVPKRASYIRVIMLELSRIASHLLWLGPFMADIGAQTPFFYIFRERELIYDLFEAATGMRMMHNYFRIGGVAADLPYGWIDKCFDFCNYFLTRVIEYQKLITRNPIFLERVEGVGVVGREEVLTWGLSGPMLRASGIQWDLRKVDNYECYDEFDWEVQWQKEGDSLARYLVRIGEMMESIKIIQQALEGIPGGPYENLEIRSFDREKEPEWNDFEYRFIGKKSSPTFELPKQELYVRVEAPKGELGIFLIGDHNGFPWRWKIRPPGFINLQILPQLVKRMKLADIMTILGSIDIIMGEVDR.

Belongs to the complex I 49 kDa subunit family. NDH is composed of at least 16 different subunits, 5 of which are encoded in the nucleus.

The protein localises to the plastid. Its subcellular location is the chloroplast thylakoid membrane. It carries out the reaction a plastoquinone + NADH + (n+1) H(+)(in) = a plastoquinol + NAD(+) + n H(+)(out). The enzyme catalyses a plastoquinone + NADPH + (n+1) H(+)(in) = a plastoquinol + NADP(+) + n H(+)(out). Functionally, NDH shuttles electrons from NAD(P)H:plastoquinone, via FMN and iron-sulfur (Fe-S) centers, to quinones in the photosynthetic chain and possibly in a chloroplast respiratory chain. The immediate electron acceptor for the enzyme in this species is believed to be plastoquinone. Couples the redox reaction to proton translocation, and thus conserves the redox energy in a proton gradient. This is NAD(P)H-quinone oxidoreductase subunit H, chloroplastic from Trifolium subterraneum (Subterranean clover).